A 194-amino-acid polypeptide reads, in one-letter code: uncharacterized protein (194 aa).

Disordered regions lie at residues K52–K71 and A86–S194. Composition is skewed to polar residues over residues G53 to E63, A98 to N111, and I119 to A132. Over residues N133–S169 the composition is skewed to basic residues. The segment covering S175–S194 has biased composition (basic and acidic residues).

This is an uncharacterized protein from Schizosaccharomyces pombe (strain 972 / ATCC 24843) (Fission yeast).